A 398-amino-acid chain; its full sequence is S-adenosylmethionine synthase (398 aa).

His16 provides a ligand contact to ATP. Asp18 lines the Mg(2+) pocket. K(+) is bound at residue Glu44. Glu57 and Gln100 together coordinate L-methionine. A flexible loop region spans residues 100–110 (QSPDIAQGVNE). ATP contacts are provided by residues 175-177 (DAK), 242-243 (RF), Asp251, 257-258 (RK), Ala274, and Lys278. Asp251 is an L-methionine binding site. Lys282 is a binding site for L-methionine.

It belongs to the AdoMet synthase family. In terms of assembly, homotetramer; dimer of dimers. It depends on Mg(2+) as a cofactor. K(+) is required as a cofactor.

It is found in the cytoplasm. The catalysed reaction is L-methionine + ATP + H2O = S-adenosyl-L-methionine + phosphate + diphosphate. The protein operates within amino-acid biosynthesis; S-adenosyl-L-methionine biosynthesis; S-adenosyl-L-methionine from L-methionine: step 1/1. In terms of biological role, catalyzes the formation of S-adenosylmethionine (AdoMet) from methionine and ATP. The overall synthetic reaction is composed of two sequential steps, AdoMet formation and the subsequent tripolyphosphate hydrolysis which occurs prior to release of AdoMet from the enzyme. This chain is S-adenosylmethionine synthase, found in Streptococcus agalactiae serotype III (strain NEM316).